A 1947-amino-acid chain; its full sequence is Sodium channel protein type 3 subunit alpha (1947 aa).

The Cytoplasmic portion of the chain corresponds to 1 to 128 (MAQALLVPPG…KIAIKILVHS (128 aa)). The disordered stretch occupies residues 28 to 60 (RAAEEKAKKPKKEQDIDDENKPKPNSDLEAGKN). Residues 46-57 (ENKPKPNSDLEA) are compositionally biased toward basic and acidic residues. The stretch at 110–455 (ILTPLNPVRK…QQMLEQLKKQ (346 aa)) is one I repeat. Residues 129 to 146 (LFSMLIMCTILTNCVFMT) form a helical membrane-spanning segment. The Extracellular segment spans residues 147–152 (LSNPPD). Residues 153–174 (WTKNVEYTFTGIYTFESLIKIL) traverse the membrane as a helical segment. Residues 175–188 (ARGFCLEDFTFLRD) are Cytoplasmic-facing. The helical transmembrane segment at 189–206 (PWNWLDFSVIVMAYVTEF) threads the bilayer. Over 207-213 (VDLGNVS) the chain is Extracellular. Asparagine 211 is a glycosylation site (N-linked (GlcNAc...) asparagine). A helical transmembrane segment spans residues 214-235 (ALRTFRVLRALKTISVIPGLKT). Over 236 to 249 (IVGALIQSVKKLSD) the chain is Cytoplasmic. The helical transmembrane segment at 250-269 (VMILTVFCLSVFALIGLQLF) threads the bilayer. The Extracellular portion of the chain corresponds to 270-369 (MGNLRNKCLQ…NYGYTSFDTF (100 aa)). Asparagine 290, asparagine 296, asparagine 302, asparagine 307, and asparagine 339 each carry an N-linked (GlcNAc...) asparagine glycan. The pore-forming intramembrane region spans 370–386 (SWAFLSLFRLMTQDYWE). The Extracellular portion of the chain corresponds to 387–397 (NLYQLTLRAAG). Residues 398–424 (KTYMIFFVLVIFLGSFYLVNLILAVVA) form a helical membrane-spanning segment. At 425–712 (MAYEEQNQAT…LVNLIVMDPF (288 aa)) the chain is on the cytoplasmic side. Serine 484, serine 485, and serine 486 each carry phosphoserine. Disordered stretches follow at residues 493-529 (SKSAKEWRNRRKKRRQREHLEGNHRPEGDRFPKSESE) and 587-632 (VGSE…ETEV). Positions 500-509 (RNRRKKRRQR) are enriched in basic residues. 2 stretches are compositionally biased toward basic and acidic residues: residues 510–529 (EHLEGNHRPEGDRFPKSESE) and 596–622 (DEHSTFEDSESRRDSLFVPHRPGERRN). Residues 693–965 (CCDSWLKVKH…QIAVGRMQKG (273 aa)) form an II repeat. A helical transmembrane segment spans residues 713–730 (VDLAITICIVLNTLFMAM). Topologically, residues 731–738 (EHYPMTEQ) are extracellular. A helical transmembrane segment spans residues 739–763 (FSSVLTVGNLVFTGIFTAEMVLKII). Topologically, residues 764–773 (AMDPYYYFQE) are cytoplasmic. Residues 774–793 (GWNIFDGIIVSLSLMELGLA) traverse the membrane as a helical segment. The Extracellular segment spans residues 794 to 797 (NVEG). The helical transmembrane segment at 798–816 (LSVLRSFRLLRVFKLAKSW) threads the bilayer. Over 817 to 834 (PTLNMLIKIIGNSVGALG) the chain is Cytoplasmic. A helical transmembrane segment spans residues 835 to 855 (NLTLVLAIIVFIFAVVGMQLF). At 856-880 (GKSYKECVCKINEDCKLPRWHMNDF) the chain is on the extracellular side. Cysteine 864 and cysteine 870 are disulfide-bonded. Positions 881-896 (FHSFLIVFRVLCGEWI) form an intramembrane region, pore-forming. Residues 897–907 (ETMWDCMEVAG) are Extracellular-facing. A disulfide bond links cysteine 902 and cysteine 911. Residues 908-934 (QTMCLIVFMLVMVIGNLVVLNLFLALL) form a helical membrane-spanning segment. At 935–1157 (LSSFSSDNLA…RKTCYSIVEH (223 aa)) the chain is on the cytoplasmic side. Residues 1070 to 1113 (EEFSSESELEESKEKLNATSSSEGSTVDVAPPREGEQAEIEPEE) are disordered. The stretch at 1140-1451 (KGKIWWNLRK…KKYYNAMKKL (312 aa)) is one III repeat. A helical membrane pass occupies residues 1158-1178 (NWFETFIVFMILLSSGALAFE). Residues 1179 to 1190 (DIYIEQRKTIKT) lie on the Extracellular side of the membrane. Residues 1191-1212 (MLEYADKVFTYIFILEMLLKWV) traverse the membrane as a helical segment. Topologically, residues 1213–1218 (AYGFQT) are cytoplasmic. The helical transmembrane segment at 1219–1244 (YFTNAWCWLDFLIVDVSLVSLVANAL) threads the bilayer. Residues 1245 to 1253 (GYSELGAIK) are Extracellular-facing. The helical transmembrane segment at 1254–1272 (SLRTLRALRPLRALSRFEG) threads the bilayer. At 1273 to 1285 (MRVVVNALVGAIP) the chain is on the cytoplasmic side. Residues 1286–1308 (SIMNVLLVCLIFWLIFSIMGVNL) form a helical membrane-spanning segment. Topologically, residues 1309–1354 (FAGKFYHCVNMTTGSMFDMSEVNNFSDCQALGKQARWKNVKVNFDN) are extracellular. A disulfide bridge links cysteine 1316 with cysteine 1336. Asparagine 1318 and asparagine 1332 each carry an N-linked (GlcNAc...) asparagine glycan. The segment at residues 1355-1371 (VGAGYLALLQVATFKGW) is an intramembrane region (pore-forming). Residues 1372 to 1394 (MDIMYAAVDSRDVKLQPVYEENL) are Extracellular-facing. The helical transmembrane segment at 1395–1420 (YMYLYFVIFIIFGSFFTLNLFIGVII) threads the bilayer. Over 1421–1478 (DNFNQQKKKFGGQDIFMTEEQKKYYNAMKKLGSKKPQKPIPRPANKFQGMVFDFVTRQ) the chain is Cytoplasmic. Serine 1453 carries the phosphoserine modification. The IV repeat unit spans residues 1460–1758 (IPRPANKFQG…WEKFDPDATQ (299 aa)). Residues 1479 to 1497 (VFDISIMILICLNMVTMMV) form a helical membrane-spanning segment. At 1498–1505 (ETDDQSKY) the chain is on the extracellular side. Residues 1506–1529 (MTLVLSRINLVFIVLFTGEFLLKL) form a helical membrane-spanning segment. Over 1530–1539 (ISLRYYYFTI) the chain is Cytoplasmic. The helical transmembrane segment at 1540–1557 (GWNIFDFVVVILSIVGMF) threads the bilayer. The Extracellular segment spans residues 1558 to 1569 (LAELIEKYFVSP). A helical membrane pass occupies residues 1570-1592 (TLFRVIRLARIGRILRLIKGAKG). Over 1593–1605 (IRTLLFALMMSLP) the chain is Cytoplasmic. The chain crosses the membrane as a helical span at residues 1606 to 1629 (ALFNIGLLLFLVMFIYAIFGMSNF). At 1630-1651 (AYVKKEAGIDDMFNFETFGNSM) the chain is on the extracellular side. An intramembrane region (pore-forming) is located at residues 1652–1664 (ICLFQITTSAGWD). Residues 1665-1696 (GLLAPILNSAPPDCDPDAIHPGSSVKGDCGNP) lie on the Extracellular side of the membrane. Residues 1697 to 1722 (SVGIFFFVSYIIISFLVVVNMYIAVI) form a helical membrane-spanning segment. Residues 1723 to 1947 (LENFSVATEE…PEKESKGKEV (225 aa)) are Cytoplasmic-facing. In terms of domain architecture, IQ spans 1852–1881 (EEVSAAIIQRNYRCYLLKQRLKNISNTYDK). The segment at 1901–1947 (LNGNSTPEKTDGSSSTTSPPSYDSVTKPDKEKFEKDKPEKESKGKEV) is disordered. The segment covering 1926–1947 (TKPDKEKFEKDKPEKESKGKEV) has biased composition (basic and acidic residues).

This sequence belongs to the sodium channel (TC 1.A.1.10) family. Nav1.3/SCN3A subfamily. As to quaternary structure, heterooligomer of an alpha subunit, SCN3A, and 1 to 3 regulatory beta subunits including SCN1B and SCN2B; disulfide-linked with some beta subunits like SCN2B. Interacts with NEDD4L; could regulate expression of SCN3A at the plasma membrane through ubiquitination-regulated endocytosis. May be ubiquitinated by NEDD4L; which would promote its endocytosis. Post-translationally, phosphorylation at Ser-1453 in a highly conserved cytoplasmic loop slows inactivation of the channel and reduces peak sodium currents. As to expression, expressed in enterochromaffin cells in both colon and small bowel (at protein level). Expressed in pancreatic alpha and beta cells.

Its subcellular location is the cell membrane. The protein resides in the basal cell membrane. It carries out the reaction Na(+)(in) = Na(+)(out). Its function is as follows. Pore-forming subunit of Nav1.3, a voltage-gated sodium (Nav) channel that directly mediates the depolarizing phase of action potentials in excitable membranes. Navs, also called VGSCs (voltage-gated sodium channels) or VDSCs (voltage-dependent sodium channels), operate by switching between closed and open conformations depending on the voltage difference across the membrane. In the open conformation they allow Na(+) ions to selectively pass through the pore, along their electrochemical gradient. The influx of Na+ ions provokes membrane depolarization, initiating the propagation of electrical signals throughout cells and tissues. In some secretory cell types, it also participates in cell excitability through membrane depolarization and regulates cells responsiveness to stimuli triggering secretion. For instance, it controls the release of serotonin/5-hydroxytryptamine by enterochromaffin cells and is required for both glucagon- and glucose-induced insulin secretion in pancreatic endocrine cells. The sequence is that of Sodium channel protein type 3 subunit alpha from Mus musculus (Mouse).